We begin with the raw amino-acid sequence, 491 residues long: Nicotinamide phosphoribosyltransferase (491 aa).

M1 bears the N-acetylmethionine mark. Y188 carries the post-translational modification Phosphotyrosine. R196 provides a ligand contact to diphosphate. Residue D219 participates in beta-nicotinamide D-ribonucleotide binding. Residues H247 and R311 each contribute to the diphosphate site. Beta-nicotinamide D-ribonucleotide contacts are provided by residues 311–313 (RPD), 353–354 (GD), G384, and R392. A Phosphoserine modification is found at S472.

It belongs to the NAPRTase family. Homodimer. As to expression, ubiquitously expressed in lymphoid and non-lymphoid tissues.

The protein resides in the nucleus. It is found in the cytoplasm. Its subcellular location is the secreted. It carries out the reaction beta-nicotinamide D-ribonucleotide + diphosphate = 5-phospho-alpha-D-ribose 1-diphosphate + nicotinamide + H(+). The protein operates within cofactor biosynthesis; NAD(+) biosynthesis; nicotinamide D-ribonucleotide from 5-phospho-alpha-D-ribose 1-diphosphate and nicotinamide: step 1/1. Its function is as follows. The secreted form behaves both as a cytokine with immunomodulating properties and an adipokine with anti-diabetic properties, it has no enzymatic activity, partly because of lack of activation by ATP, which has a low level in extracellular space and plasma. Catalyzes the condensation of nicotinamide with 5-phosphoribosyl-1-pyrophosphate to yield nicotinamide mononucleotide, an intermediate in the biosynthesis of NAD. It is the rate limiting component in the mammalian NAD biosynthesis pathway. Plays a role in the modulation of circadian clock function. NAMPT-dependent oscillatory production of NAD regulates oscillation of clock target gene expression by releasing the core clock component: CLOCK-BMAL1 heterodimer from NAD-dependent SIRT1-mediated suppression. This chain is Nicotinamide phosphoribosyltransferase (Nampt), found in Mus musculus (Mouse).